The primary structure comprises 272 residues: Phosphoglycolate phosphatase (272 aa).

D19 (nucleophile) is an active-site residue. Positions 19, 21, and 182 each coordinate Mg(2+).

It belongs to the HAD-like hydrolase superfamily. CbbY/CbbZ/Gph/YieH family. Mg(2+) is required as a cofactor.

The catalysed reaction is 2-phosphoglycolate + H2O = glycolate + phosphate. It participates in organic acid metabolism; glycolate biosynthesis; glycolate from 2-phosphoglycolate: step 1/1. In terms of biological role, specifically catalyzes the dephosphorylation of 2-phosphoglycolate. Is involved in the dissimilation of the intracellular 2-phosphoglycolate formed during the DNA repair of 3'-phosphoglycolate ends, a major class of DNA lesions induced by oxidative stress. This is Phosphoglycolate phosphatase from Pseudomonas savastanoi pv. phaseolicola (strain 1448A / Race 6) (Pseudomonas syringae pv. phaseolicola (strain 1448A / Race 6)).